The following is a 409-amino-acid chain: uncharacterized protein (409 aa).

10 helical membrane-spanning segments follow: residues 53–73 (IITLVGLLCNIGMYLIMYVHC), 83–103 (WCYFAVAFLIFAYQTLDNVDG), 115–135 (LGELFDHVCDALSVAMFAIVM), 141–161 (IGPYWTFFSFIVGMWPFYLAH), 183–203 (VLFMIIEIITGIFGSDIWTYG), 205–225 (STTVGKIATVFVSIGAVVTCL), 243–263 (CLLQLTPICLFTALIVIWASV), 265–285 (NLITEQPHLFIMTLGILFGYI), 299–319 (CSLFYPIFVPIIIVVLNSILA), and 329–349 (TVALWILFSIACAQFLLFSYF). Residues 388 to 401 (EEGSSSIGNSTDDI) are compositionally biased toward polar residues. A disordered region spans residues 388–409 (EEGSSSIGNSTDDINPSEIEEI).

The protein belongs to the CDP-alcohol phosphatidyltransferase class-I family.

It localises to the membrane. This is an uncharacterized protein from Dictyostelium discoideum (Social amoeba).